The following is a 364-amino-acid chain: Sorbitol dehydrogenase (364 aa).

C54 provides a ligand contact to Zn(2+). Y60 serves as a coordination point for substrate. Zn(2+) contacts are provided by H79 and E80. Residue E165 participates in substrate binding. NAD(+)-binding positions include I193, D213, R218, 284–286 (VGM), and 308–310 (VFR). Substrate is bound by residues R310 and Y311.

This sequence belongs to the zinc-containing alcohol dehydrogenase family. Homotetramer. It depends on Zn(2+) as a cofactor. As to expression, mostly expressed in dry seeds and leaves, and, to a lower extent, in roots, stems, flowers and siliques (at protein level).

It localises to the mitochondrion membrane. It is found in the cell membrane. The protein resides in the cytoplasm. The protein localises to the cytosol. The catalysed reaction is keto-D-fructose + NADH + H(+) = D-sorbitol + NAD(+). It catalyses the reaction ribitol + NAD(+) = D-ribulose + NADH + H(+). It carries out the reaction xylitol + NAD(+) = D-xylulose + NADH + H(+). In terms of biological role, polyol dehydrogenase that catalyzes the NAD(+)-dependent oxidation of various sugar alcohols. Is mostly active with D-sorbitol (D-glucitol), ribitol and xylitol as substrates, leading to the C2-oxidized products D-fructose, D-ribulose and D-xylulose, respectively. To a lesser extent, can also oxidize arabitol, mannitol, lactitol and maltitol in vitro. Is required for sorbitol metabolism. Cannot use NADP(+) as the electron acceptor. The polypeptide is Sorbitol dehydrogenase (SDH) (Arabidopsis thaliana (Mouse-ear cress)).